We begin with the raw amino-acid sequence, 150 residues long: D-aminoacyl-tRNA deacylase (150 aa).

The Gly-cisPro motif, important for rejection of L-amino acids motif lies at 138–139 (GP).

It belongs to the DTD family. In terms of assembly, homodimer.

Its subcellular location is the cytoplasm. It carries out the reaction glycyl-tRNA(Ala) + H2O = tRNA(Ala) + glycine + H(+). It catalyses the reaction a D-aminoacyl-tRNA + H2O = a tRNA + a D-alpha-amino acid + H(+). In terms of biological role, an aminoacyl-tRNA editing enzyme that deacylates mischarged D-aminoacyl-tRNAs. Also deacylates mischarged glycyl-tRNA(Ala), protecting cells against glycine mischarging by AlaRS. Acts via tRNA-based rather than protein-based catalysis; rejects L-amino acids rather than detecting D-amino acids in the active site. By recycling D-aminoacyl-tRNA to D-amino acids and free tRNA molecules, this enzyme counteracts the toxicity associated with the formation of D-aminoacyl-tRNA entities in vivo and helps enforce protein L-homochirality. The chain is D-aminoacyl-tRNA deacylase from Chromobacterium violaceum (strain ATCC 12472 / DSM 30191 / JCM 1249 / CCUG 213 / NBRC 12614 / NCIMB 9131 / NCTC 9757 / MK).